Reading from the N-terminus, the 123-residue chain is Putative EG45-like domain containing protein 1 (123 aa).

The signal sequence occupies residues 1–21; that stretch reads MSKSIVFFSTVLVFLFSFSYA. The Expansin-like EG45 domain occupies 24–123; the sequence is GIATFYTSYT…AGIINIDYFP (100 aa).

The protein localises to the secreted. Might have a systemic role in water and solute homeostasis. The sequence is that of Putative EG45-like domain containing protein 1 (EGC1) from Arabidopsis thaliana (Mouse-ear cress).